Consider the following 138-residue polypeptide: Ribosome-binding factor A (138 aa).

Belongs to the RbfA family. In terms of assembly, monomer. Binds 30S ribosomal subunits, but not 50S ribosomal subunits or 70S ribosomes.

The protein localises to the cytoplasm. Its function is as follows. One of several proteins that assist in the late maturation steps of the functional core of the 30S ribosomal subunit. Associates with free 30S ribosomal subunits (but not with 30S subunits that are part of 70S ribosomes or polysomes). Required for efficient processing of 16S rRNA. May interact with the 5'-terminal helix region of 16S rRNA. The polypeptide is Ribosome-binding factor A (Bradyrhizobium sp. (strain BTAi1 / ATCC BAA-1182)).